A 624-amino-acid polypeptide reads, in one-letter code: Chaperone protein HtpG (624 aa).

An a; substrate-binding region spans residues 1-336 (MKGQETRGFQ…SNDLPLNVSR (336 aa)). Residues 337–552 (EILQDSTVTR…ADEMSTQMAK (216 aa)) are b. The c stretch occupies residues 553–624 (LFAAAGQSVP…IRRMNQLLVS (72 aa)).

Belongs to the heat shock protein 90 family. Homodimer.

It localises to the cytoplasm. In terms of biological role, molecular chaperone. Has ATPase activity. This is Chaperone protein HtpG from Salmonella typhi.